The following is a 150-amino-acid chain: Protein-export protein SecB (150 aa).

It belongs to the SecB family. In terms of assembly, homotetramer, a dimer of dimers. One homotetramer interacts with 1 SecA dimer.

The protein localises to the cytoplasm. Functionally, one of the proteins required for the normal export of preproteins out of the cell cytoplasm. It is a molecular chaperone that binds to a subset of precursor proteins, maintaining them in a translocation-competent state. It also specifically binds to its receptor SecA. This chain is Protein-export protein SecB, found in Chromobacterium violaceum (strain ATCC 12472 / DSM 30191 / JCM 1249 / CCUG 213 / NBRC 12614 / NCIMB 9131 / NCTC 9757 / MK).